The following is a 220-amino-acid chain: Thiopurine S-methyltransferase (220 aa).

Residues W10, L45, E66, and R123 each contribute to the S-adenosyl-L-methionine site.

Belongs to the class I-like SAM-binding methyltransferase superfamily. TPMT family.

Its subcellular location is the cytoplasm. The catalysed reaction is S-adenosyl-L-methionine + a thiopurine = S-adenosyl-L-homocysteine + a thiopurine S-methylether.. This chain is Thiopurine S-methyltransferase, found in Pseudomonas syringae pv. syringae (strain B728a).